A 567-amino-acid chain; its full sequence is Chitinase 3 (567 aa).

The first 16 residues, 1-16 (MLYLLTIFSLLLPALA), serve as a signal peptide directing secretion. A GH18 domain is found at 23–313 (SNVAVYWGQN…ENMKAIVKKA (291 aa)). Glutamate 157 serves as the catalytic Proton donor. Asparagine 159 carries N-linked (GlcNAc...) asparagine glycosylation. The disordered stretch occupies residues 313–471 (ASPGEETTSS…TSALSSSTTT (159 aa)). Low complexity-rich tracts occupy residues 319 to 436 (TTSS…SLSS) and 444 to 471 (STTT…STTT).

The protein belongs to the glycosyl hydrolase 18 family. Chitinase class III subfamily.

It is found in the secreted. The catalysed reaction is Random endo-hydrolysis of N-acetyl-beta-D-glucosaminide (1-&gt;4)-beta-linkages in chitin and chitodextrins.. Chitinase involved in the remodeling of chitin in the fungal cell wall. Plays a role in cell separation. In Candida albicans (strain SC5314 / ATCC MYA-2876) (Yeast), this protein is Chitinase 3 (CHT3).